The sequence spans 465 residues: Glutamate--tRNA ligase (465 aa).

Positions 11–21 (PSPTGFIHLGN) match the 'HIGH' region motif. The 'KMSKS' region signature appears at 243 to 247 (KMSKR). ATP is bound at residue Lys-246.

This sequence belongs to the class-I aminoacyl-tRNA synthetase family. Glutamate--tRNA ligase type 1 subfamily. As to quaternary structure, monomer.

It is found in the cytoplasm. The enzyme catalyses tRNA(Glu) + L-glutamate + ATP = L-glutamyl-tRNA(Glu) + AMP + diphosphate. In terms of biological role, catalyzes the attachment of glutamate to tRNA(Glu) in a two-step reaction: glutamate is first activated by ATP to form Glu-AMP and then transferred to the acceptor end of tRNA(Glu). The sequence is that of Glutamate--tRNA ligase from Cupriavidus metallidurans (strain ATCC 43123 / DSM 2839 / NBRC 102507 / CH34) (Ralstonia metallidurans).